Reading from the N-terminus, the 159-residue chain is Probable cyclic pyranopterin monophosphate synthase (159 aa).

Residues 75–77 and 111–112 each bind substrate; these read LCH and ME. The active site involves aspartate 126.

The protein belongs to the MoaC family. As to quaternary structure, homohexamer; trimer of dimers.

It carries out the reaction (8S)-3',8-cyclo-7,8-dihydroguanosine 5'-triphosphate = cyclic pyranopterin phosphate + diphosphate. The protein operates within cofactor biosynthesis; molybdopterin biosynthesis. Catalyzes the conversion of (8S)-3',8-cyclo-7,8-dihydroguanosine 5'-triphosphate to cyclic pyranopterin monophosphate (cPMP). The sequence is that of Probable cyclic pyranopterin monophosphate synthase from Pyrococcus horikoshii (strain ATCC 700860 / DSM 12428 / JCM 9974 / NBRC 100139 / OT-3).